A 482-amino-acid chain; its full sequence is tRNA sulfurtransferase (482 aa).

The THUMP domain maps to 61–165 (LAIRDALTRI…DDRLLLIKGR (105 aa)). ATP-binding positions include 183–184 (LI), Lys-265, Gly-287, and Gln-296. A disulfide bridge connects residues Cys-344 and Cys-456. A Rhodanese domain is found at 404–482 (FGPNDVILDI…GFNNVKVYRP (79 aa)). Catalysis depends on Cys-456, which acts as the Cysteine persulfide intermediate.

The protein belongs to the ThiI family.

It is found in the cytoplasm. The catalysed reaction is [ThiI sulfur-carrier protein]-S-sulfanyl-L-cysteine + a uridine in tRNA + 2 reduced [2Fe-2S]-[ferredoxin] + ATP + H(+) = [ThiI sulfur-carrier protein]-L-cysteine + a 4-thiouridine in tRNA + 2 oxidized [2Fe-2S]-[ferredoxin] + AMP + diphosphate. It carries out the reaction [ThiS sulfur-carrier protein]-C-terminal Gly-Gly-AMP + S-sulfanyl-L-cysteinyl-[cysteine desulfurase] + AH2 = [ThiS sulfur-carrier protein]-C-terminal-Gly-aminoethanethioate + L-cysteinyl-[cysteine desulfurase] + A + AMP + 2 H(+). It participates in cofactor biosynthesis; thiamine diphosphate biosynthesis. In terms of biological role, catalyzes the ATP-dependent transfer of a sulfur to tRNA to produce 4-thiouridine in position 8 of tRNAs, which functions as a near-UV photosensor. Also catalyzes the transfer of sulfur to the sulfur carrier protein ThiS, forming ThiS-thiocarboxylate. This is a step in the synthesis of thiazole, in the thiamine biosynthesis pathway. The sulfur is donated as persulfide by IscS. The protein is tRNA sulfurtransferase of Shigella sonnei (strain Ss046).